The chain runs to 290 residues: Fat storage-inducing transmembrane protein 1 (290 aa).

The next 5 membrane-spanning stretches (helical) occupy residues 1 to 21 (MFLNSILVVITDLAAGLLGNT), 26 to 46 (HFHLLLSALLLFGPLLSLWVS), 65 to 85 (SGWGWTCIFVGSFVFVLSFSV), 173 to 193 (LLLCLCCLLLAEETAVFGPYL), and 205 to 225 (ILFLFCVLLLSLWVFLLLCLL).

This sequence belongs to the FIT family. FIT1 subfamily.

The protein resides in the endoplasmic reticulum membrane. May play an important role in the formation of lipid droplets (LDs) which are storage organelles at the center of lipid and energy homeostasis. May directly bind to diacylglycerol (DAGs) and triacylglycerol. This Danio rerio (Zebrafish) protein is Fat storage-inducing transmembrane protein 1 (fitm1l).